The following is a 327-amino-acid chain: tRNA N6-adenosine threonylcarbamoyltransferase (327 aa).

The Fe cation site is built by His-107 and His-111. Substrate-binding positions include 129 to 133 (LVSGG), Asp-162, Gly-175, and Asn-263. A Fe cation-binding site is contributed by Asp-291.

Belongs to the KAE1 / TsaD family. Requires Fe(2+) as cofactor.

Its subcellular location is the cytoplasm. The catalysed reaction is L-threonylcarbamoyladenylate + adenosine(37) in tRNA = N(6)-L-threonylcarbamoyladenosine(37) in tRNA + AMP + H(+). In terms of biological role, required for the formation of a threonylcarbamoyl group on adenosine at position 37 (t(6)A37) in tRNAs that read codons beginning with adenine. Is involved in the transfer of the threonylcarbamoyl moiety of threonylcarbamoyl-AMP (TC-AMP) to the N6 group of A37, together with TsaE and TsaB. TsaD likely plays a direct catalytic role in this reaction. In Nautilia profundicola (strain ATCC BAA-1463 / DSM 18972 / AmH), this protein is tRNA N6-adenosine threonylcarbamoyltransferase.